The following is a 358-amino-acid chain: Adenosine deaminase (358 aa).

Positions 14 and 16 each coordinate Zn(2+). 3 residues coordinate substrate: His16, Asp18, and Gly183. His212 lines the Zn(2+) pocket. The Proton donor role is filled by Glu215. Asp294 is a Zn(2+) binding site. Asp295 contacts substrate.

This sequence belongs to the metallo-dependent hydrolases superfamily. Adenosine and AMP deaminases family. Zn(2+) serves as cofactor.

It localises to the cell membrane. Its subcellular location is the cell junction. The protein resides in the cytoplasmic vesicle lumen. It is found in the cytoplasm. The protein localises to the lysosome. The catalysed reaction is adenosine + H2O + H(+) = inosine + NH4(+). It catalyses the reaction 2'-deoxyadenosine + H2O + H(+) = 2'-deoxyinosine + NH4(+). Functionally, catalyzes the hydrolytic deamination of adenosine and 2-deoxyadenosine. Plays an important role in purine metabolism and in adenosine homeostasis. Modulates signaling by extracellular adenosine, and so contributes indirectly to cellular signaling events. May act as a positive regulator of T-cell coactivation. The sequence is that of Adenosine deaminase (ada) from Xenopus laevis (African clawed frog).